The following is a 358-amino-acid chain: Ribosomal RNA large subunit methyltransferase M (358 aa).

S-adenosyl-L-methionine contacts are provided by residues serine 191, 224-227 (APGG), aspartate 243, aspartate 263, and aspartate 279. The active-site Proton acceptor is the lysine 308.

This sequence belongs to the class I-like SAM-binding methyltransferase superfamily. RNA methyltransferase RlmE family. RlmM subfamily. In terms of assembly, monomer.

The protein resides in the cytoplasm. It catalyses the reaction cytidine(2498) in 23S rRNA + S-adenosyl-L-methionine = 2'-O-methylcytidine(2498) in 23S rRNA + S-adenosyl-L-homocysteine + H(+). Its function is as follows. Catalyzes the 2'-O-methylation at nucleotide C2498 in 23S rRNA. The chain is Ribosomal RNA large subunit methyltransferase M from Marinobacter nauticus (strain ATCC 700491 / DSM 11845 / VT8) (Marinobacter aquaeolei).